The chain runs to 523 residues: 2-isopropylmalate synthase (523 aa).

The 263-residue stretch at 5 to 267 (VIIFDTTLRD…HTAINHQEIW (263 aa)) folds into the Pyruvate carboxyltransferase domain. Mn(2+) contacts are provided by Asp-14, His-202, His-204, and Asn-238. The regulatory domain stretch occupies residues 392–523 (RLDYFSVQSS…QHNENNKETV (132 aa)).

This sequence belongs to the alpha-IPM synthase/homocitrate synthase family. LeuA type 1 subfamily. As to quaternary structure, homodimer. It depends on Mn(2+) as a cofactor.

The protein resides in the cytoplasm. The enzyme catalyses 3-methyl-2-oxobutanoate + acetyl-CoA + H2O = (2S)-2-isopropylmalate + CoA + H(+). The protein operates within amino-acid biosynthesis; L-leucine biosynthesis; L-leucine from 3-methyl-2-oxobutanoate: step 1/4. Functionally, catalyzes the condensation of the acetyl group of acetyl-CoA with 3-methyl-2-oxobutanoate (2-ketoisovalerate) to form 3-carboxy-3-hydroxy-4-methylpentanoate (2-isopropylmalate). The polypeptide is 2-isopropylmalate synthase (Shigella dysenteriae serotype 1 (strain Sd197)).